The sequence spans 647 residues: DNA ligase (647 aa).

Residues 30 to 34 (DEEYD), 79 to 80 (SM), and E105 contribute to the NAD(+) site. K107 functions as the N6-AMP-lysine intermediate in the catalytic mechanism. Residues R128, E162, and K301 each coordinate NAD(+). 4 residues coordinate Zn(2+): C395, C398, C411, and C416. A BRCT domain is found at 570–647 (KSDGVIFGKT…ESAFNELVKE (78 aa)).

Belongs to the NAD-dependent DNA ligase family. LigA subfamily. Mg(2+) serves as cofactor. Mn(2+) is required as a cofactor.

The enzyme catalyses NAD(+) + (deoxyribonucleotide)n-3'-hydroxyl + 5'-phospho-(deoxyribonucleotide)m = (deoxyribonucleotide)n+m + AMP + beta-nicotinamide D-nucleotide.. Its function is as follows. DNA ligase that catalyzes the formation of phosphodiester linkages between 5'-phosphoryl and 3'-hydroxyl groups in double-stranded DNA using NAD as a coenzyme and as the energy source for the reaction. It is essential for DNA replication and repair of damaged DNA. This is DNA ligase from Campylobacter jejuni (strain RM1221).